A 1148-amino-acid polypeptide reads, in one-letter code: Alpha-mannosidase 2 (1148 aa).

Residues 1 to 5 (MKLSR) are Cytoplasmic-facing. A helical; Signal-anchor for type II membrane protein transmembrane segment spans residues 6–26 (QFTVFGSAIFCVVIFSLYLML). The Lumenal portion of the chain corresponds to 27-1148 (DRGHLDYPRG…EISTSRIRLR (1122 aa)). Ser-80 and Ser-82 each carry phosphoserine. Asn-93 carries N-linked (GlcNAc...) asparagine glycosylation. Positions 174, 176, 288, and 568 each coordinate Zn(2+). The active-site Nucleophile is Asp-288. The disordered stretch occupies residues 1121–1148 (MHSPPDAQNTSEVSLSPMEISTSRIRLR).

The protein belongs to the glycosyl hydrolase 38 family. In terms of assembly, homodimer; disulfide-linked. Requires Zn(2+) as cofactor. Post-translationally, glycosylated. In terms of tissue distribution, liver.

It localises to the golgi apparatus membrane. The catalysed reaction is N(4)-{beta-D-GlcNAc-(1-&gt;2)-alpha-D-Man-(1-&gt;3)-[alpha-D-Man-(1-&gt;3)-[alpha-D-Man-(1-&gt;6)]-alpha-D-Man-(1-&gt;6)]-beta-D-Man-(1-&gt;4)-beta-D-GlcNAc-(1-&gt;4)-beta-D-GlcNAc}-L-asparaginyl-[protein] + 2 H2O = 2 alpha-D-mannopyranose + an N(4)-{beta-D-GlcNAc-(1-&gt;2)-alpha-D-Man-(1-&gt;3)-[alpha-D-Man-(1-&gt;6)]-beta-D-Man-(1-&gt;4)-beta-D-GlcNAc-(1-&gt;4)-beta-D-GlcNAc}-L-asparaginyl-[protein]. Its pathway is protein modification; protein glycosylation. With respect to regulation, inhibited by swainsonine. Catalyzes the first committed step in the biosynthesis of complex N-glycans. It controls conversion of high mannose to complex N-glycans; the final hydrolytic step in the N-glycan maturation pathway. This is Alpha-mannosidase 2 (Man2a1) from Rattus norvegicus (Rat).